The following is a 93-amino-acid chain: MSLPEILPLEVIDKTINQKVLIVLQSNREFEGTLVGFDDFVNVILEDAVEWLIDPEDESRNEKVMQHHGRMLLSGNNIAILVPGGKKTPTEAL.

Residues 7-87 (LPLEVIDKTI…IAILVPGGKK (81 aa)) enclose the Sm domain.

This sequence belongs to the snRNP Sm proteins family. As to quaternary structure, component of the heptameric LSM1-LSM7 complex that forms a seven-membered ring structure with a donut shape. The LSm subunits are arranged in the order LSM1, LSM2, LSM3, LSM6, LSM5, LSM7 and LSM4. Except for LSM1, where a C-terminal helix crosses the ring structure to form additional interactions with LSM3 and LSM6, each subunit interacts only with its two neighboring subunits. The LSM1-LSM7 complex interacts with PAT1; within the complex PAT1 has direct interactions with LSM2 and LSM3. The LSM1-LSM7 complex interacts with XRN1. Component of the heptameric LSM2-LSM8 complex that forms a seven-membered ring structure with a donut shape; an RNA strand can pass through the hole in the center of the ring structure. The LSm subunits are arranged in the order LSM8, LSM2, LSM3, LSM6, LSM5, LSM7 and LSM4. Component of the spliceosome U4/U6-U5 tri-snRNP complex composed of the U4, U6 and U5 snRNAs and at least PRP3, PRP4, PRP6, PRP8, PRP18, PRP31, PRP38, SNU13, SNU23, SNU66, SNU114, SPP381, SMB1, SMD1, SMD2, SMD3, SMX2, SMX3, LSM2, LSM3, LSM4, LSM5, LSM6, LSM7, LSM8, BRR2 and DIB1. May be found in a complex comprising LSM2-LSM7 without LSM1 or LSM8; the complex associates with pre-P RNA and snoRNA SNR5.

The protein resides in the nucleus. It is found in the nucleolus. It localises to the cytoplasm. In terms of biological role, component of LSm protein complexes, which are involved in RNA processing and may function in a chaperone-like manner. Component of the cytoplasmic LSM1-LSM7 complex which is involved in mRNA degradation by activating the decapping step. Together with PAT1, the LSM1-LSM7 complex binds to osmotic stress-activated mRNAs to attenuate the osmotic stress response, probably by limiting ribosome access to the mRNA and consequently translation. Component of the nuclear LSM2-LSM8 complex, which is involved in spliceosome assembly. The LSM2-LSM8 complex plays a role in the biogenesis of the spliceosomal U4/U6-U5 tri-snRNP complex by accelerating PRP24-mediated annealing of U4/U6 di-snRNA. The LSM2-LSM8 complex binds U6 snRNA terminating with a non-cyclic 3' phosphate group. LSM2-LSM8 is probably also involved in degradation of nuclear pre-mRNA by targeting them for decapping. LSM2-LSM8 could be involved in processing of pre-tRNAs, pre-rRNAs and U3 snoRNA, although involvement may be indirect. In a complex that probably contains LSM2-LSM7, but not LSM1 or LSM8, associates with the precursor of the RNA component of RNase P (pre-P RNA) and may be involved in maturing pre-P RNA; the complex also associates with snoRNA SNR5. This Saccharomyces cerevisiae (strain ATCC 204508 / S288c) (Baker's yeast) protein is LSM complex subunit LSM5 (LSM5).